A 357-amino-acid polypeptide reads, in one-letter code: uncharacterized protein (357 aa).

The N-terminal stretch at 1–19 is a signal peptide; sequence MKRILSFIFIILFFNSSYA.

This is an uncharacterized protein from Rickettsia prowazekii (strain Madrid E).